Reading from the N-terminus, the 374-residue chain is MKAILALEDGTYFEGTSFTGPGESGGEAIFNTGMTGYQEVLTDPSYTGQMVCMTYPLIGNYGITKEDIESAKVHVAAFIVKECCKHPSNWRSVMSLPEYLKEAGVMGIEGIDTRALTRHLRINGAMRGIISTEELDPEKLVAKAKQLPTMEGQNLADTVTSETCYAWQDGKPVPVDVSSGYKWSDKGPRLVLVDYGVKWNILRLLDEQGFEVLSVPSHYSEEQVRALEPDAIFLSNGPGDPAVLDQAVKNAKSYCEDLPVAGICLGHQILGQALGGKAFKLKFGHHGCNHPVMDMESKKIEISSQNHGFCVDISDCSDLKITHKNLNDETLEGFAHKTKPIIAIQFHPEAAPGPHDSCYFFARFRNLVKDATGK.

Residues 1 to 185 (MKAILALEDG…DVSSGYKWSD (185 aa)) are CPSase. S45, G237, and G239 together coordinate L-glutamine. In terms of domain architecture, Glutamine amidotransferase type-1 spans 189–374 (RLVLVDYGVK…RNLVKDATGK (186 aa)). The active-site Nucleophile is C264. L-glutamine-binding residues include L265, Q268, N306, G308, and F309. Catalysis depends on residues H347 and E349.

Belongs to the CarA family. Composed of two chains; the small (or glutamine) chain promotes the hydrolysis of glutamine to ammonia, which is used by the large (or ammonia) chain to synthesize carbamoyl phosphate. Tetramer of heterodimers (alpha,beta)4.

The enzyme catalyses hydrogencarbonate + L-glutamine + 2 ATP + H2O = carbamoyl phosphate + L-glutamate + 2 ADP + phosphate + 2 H(+). It catalyses the reaction L-glutamine + H2O = L-glutamate + NH4(+). It participates in amino-acid biosynthesis; L-arginine biosynthesis; carbamoyl phosphate from bicarbonate: step 1/1. The protein operates within pyrimidine metabolism; UMP biosynthesis via de novo pathway; (S)-dihydroorotate from bicarbonate: step 1/3. Its function is as follows. Small subunit of the glutamine-dependent carbamoyl phosphate synthetase (CPSase). CPSase catalyzes the formation of carbamoyl phosphate from the ammonia moiety of glutamine, carbonate, and phosphate donated by ATP, constituting the first step of 2 biosynthetic pathways, one leading to arginine and/or urea and the other to pyrimidine nucleotides. The small subunit (glutamine amidotransferase) binds and cleaves glutamine to supply the large subunit with the substrate ammonia. The chain is Carbamoyl phosphate synthase small chain from Maridesulfovibrio salexigens (strain ATCC 14822 / DSM 2638 / NCIMB 8403 / VKM B-1763) (Desulfovibrio salexigens).